Reading from the N-terminus, the 1219-residue chain is N-acetylglucosamine-1-phosphotransferase subunits alpha/beta (1219 aa).

The helical transmembrane segment at 27 to 47 (LCFGGLVLMIVSAFQFGEVVV) threads the bilayer. Residues asparagine 88, asparagine 119, asparagine 153, asparagine 292, and asparagine 381 are each glycosylated (N-linked (GlcNAc...) asparagine). 4 cysteine pairs are disulfide-bonded: cysteine 443/cysteine 466, cysteine 457/cysteine 473, cysteine 508/cysteine 531, and cysteine 522/cysteine 538. LNR repeat units follow at residues 443-478 (CAEG…GSSR) and 508-538 (CNQG…VGDC). Residue aspartate 454 coordinates Ca(2+). The N-linked (GlcNAc...) asparagine glycan is linked to asparagine 462. 5 residues coordinate Ca(2+): aspartate 469, aspartate 472, aspartate 519, aspartate 534, and aspartate 537. N-linked (GlcNAc...) asparagine glycans are attached at residues asparagine 554, asparagine 610, asparagine 617, asparagine 645, asparagine 696, asparagine 726, asparagine 823, and asparagine 974. The tract at residues 640–666 (ELPKSNTSTPVRDKEEEPKPTVATPEP) is disordered. The region spanning 696-804 (NETLLPDEVK…DDVTTKAQSR (109 aa)) is the DMAP1-binding domain. The EF-hand domain occupies 970 to 1005 (VQQLNISEVFDEIDTDHSGVLSDREIRTLATRIHEL). Ca(2+)-binding residues include aspartate 983, aspartate 985, serine 987, and glutamate 994. Residues asparagine 1021, asparagine 1029, and asparagine 1094 are each glycosylated (N-linked (GlcNAc...) asparagine). Residues 1180 to 1200 (VLVTLVVFTVMSFFAEQLVML) form a helical membrane-spanning segment.

Belongs to the stealth family. As to quaternary structure, hexamer of two alpha, two beta and two gamma (GNPTG) subunits; disulfide-linked. The alpha and/or the beta subunits of the enzyme constitute the catalytic subunits. In terms of processing, the alpha- and beta-subunits are generated by a proteolytic cleavage by mbtps1 protease at the Gln-893-Asp-894 bond.

The protein localises to the golgi apparatus membrane. It carries out the reaction N(4)-[alpha-D-mannosyl-(1-&gt;2)-alpha-D-mannosyl-(glycan)]-L-asparaginyl-[protein] + UDP-N-acetyl-alpha-D-glucosamine = N(4)-[6-(N-acetyl-alpha-D-glucosaminyl-1-phospho)-alpha-D-mannosyl-(1-&gt;2)-alpha-D-mannosyl-(glycan)]-L-asparaginyl-[protein] + UMP + H(+). In terms of biological role, catalyzes the formation of mannose 6-phosphate (M6P) markers on high mannose type oligosaccharides in the Golgi apparatus. M6P residues are required to bind to the M6P receptors (MPR), which mediate the vesicular transport of lysosomal enzymes to the endosomal/prelysosomal compartment. This is N-acetylglucosamine-1-phosphotransferase subunits alpha/beta (gnptab) from Danio rerio (Zebrafish).